The chain runs to 605 residues: Pyruvate decarboxylase 1 (605 aa).

Substrate is bound by residues aspartate 67 and histidine 154. Positions 432-514 (DSWFNCQKLR…FLINNGGYTI (83 aa)) are thiamine pyrophosphate binding. Mg(2+) contacts are provided by aspartate 482, asparagine 509, and glycine 511. Glutamate 515 provides a ligand contact to substrate.

Belongs to the TPP enzyme family. Homotetramer. A metal cation is required as a cofactor. Thiamine diphosphate serves as cofactor.

The catalysed reaction is a 2-oxocarboxylate + H(+) = an aldehyde + CO2. In Oryza sativa subsp. indica (Rice), this protein is Pyruvate decarboxylase 1 (PDC1).